Here is a 708-residue protein sequence, read N- to C-terminus: DNA ligase 2 (708 aa).

Residues 71 to 75, 121 to 122, and Glu-153 each bind NAD(+); these read DADYD and SL. Lys-155 functions as the N6-AMP-lysine intermediate in the catalytic mechanism. NAD(+)-binding residues include Arg-176, Glu-213, Lys-330, and Lys-354. Residues Cys-448, Cys-451, Cys-466, and Cys-471 each coordinate Zn(2+). A BRCT domain is found at 627–708; that stretch reads ADAGTLAGKE…LLRLAEAAPE (82 aa).

This sequence belongs to the NAD-dependent DNA ligase family. LigA subfamily. The cofactor is Mg(2+). Requires Mn(2+) as cofactor.

The enzyme catalyses NAD(+) + (deoxyribonucleotide)n-3'-hydroxyl + 5'-phospho-(deoxyribonucleotide)m = (deoxyribonucleotide)n+m + AMP + beta-nicotinamide D-nucleotide.. DNA ligase that catalyzes the formation of phosphodiester linkages between 5'-phosphoryl and 3'-hydroxyl groups in double-stranded DNA using NAD as a coenzyme and as the energy source for the reaction. It is essential for DNA replication and repair of damaged DNA. The polypeptide is DNA ligase 2 (Opitutus terrae (strain DSM 11246 / JCM 15787 / PB90-1)).